Here is a 161-residue protein sequence, read N- to C-terminus: Nucleotide-binding protein Bmul_0741/BMULJ_02519 (161 aa).

Belongs to the YajQ family.

Functionally, nucleotide-binding protein. In Burkholderia multivorans (strain ATCC 17616 / 249), this protein is Nucleotide-binding protein Bmul_0741/BMULJ_02519.